The following is a 268-amino-acid chain: Adenosylcobinamide-GDP ribazoletransferase (268 aa).

Transmembrane regions (helical) follow at residues 1 to 21, 36 to 56, 59 to 79, 112 to 132, 138 to 158, 182 to 202, 212 to 232, and 244 to 264; these read MAGN…TLPV, YLFI…GTLF, ILPA…LTGI, AGGL…AMTF, WLFV…ITII, LAAV…AAII, IMAG…ILII, and VIGA…GAVL.

The protein belongs to the CobS family. Requires Mg(2+) as cofactor.

The protein localises to the cell membrane. The catalysed reaction is alpha-ribazole + adenosylcob(III)inamide-GDP = adenosylcob(III)alamin + GMP + H(+). The enzyme catalyses alpha-ribazole 5'-phosphate + adenosylcob(III)inamide-GDP = adenosylcob(III)alamin 5'-phosphate + GMP + H(+). It functions in the pathway cofactor biosynthesis; adenosylcobalamin biosynthesis; adenosylcobalamin from cob(II)yrinate a,c-diamide: step 7/7. Functionally, joins adenosylcobinamide-GDP and alpha-ribazole to generate adenosylcobalamin (Ado-cobalamin). Also synthesizes adenosylcobalamin 5'-phosphate from adenosylcobinamide-GDP and alpha-ribazole 5'-phosphate. This is Adenosylcobinamide-GDP ribazoletransferase from Methanocella arvoryzae (strain DSM 22066 / NBRC 105507 / MRE50).